The sequence spans 178 residues: GTP-dependent dephospho-CoA kinase (178 aa).

GTP is bound by residues Asp-55, Val-57, Asp-74, Lys-76, and Glu-127.

This sequence belongs to the GTP-dependent DPCK family.

It catalyses the reaction 3'-dephospho-CoA + GTP = GDP + CoA + H(+). The protein operates within cofactor biosynthesis; coenzyme A biosynthesis. Functionally, catalyzes the GTP-dependent phosphorylation of the 3'-hydroxyl group of dephosphocoenzyme A to form coenzyme A (CoA). The sequence is that of GTP-dependent dephospho-CoA kinase from Saccharolobus islandicus (strain Y.G.57.14 / Yellowstone #1) (Sulfolobus islandicus).